A 518-amino-acid polypeptide reads, in one-letter code: Lysine--tRNA ligase (518 aa).

Residues Met-1–Ile-28 form a disordered region. Positions 428 and 435 each coordinate Mg(2+).

The protein belongs to the class-II aminoacyl-tRNA synthetase family. Homodimer. The cofactor is Mg(2+).

The protein resides in the cytoplasm. It catalyses the reaction tRNA(Lys) + L-lysine + ATP = L-lysyl-tRNA(Lys) + AMP + diphosphate. The protein is Lysine--tRNA ligase of Paraburkholderia phytofirmans (strain DSM 17436 / LMG 22146 / PsJN) (Burkholderia phytofirmans).